A 109-amino-acid chain; its full sequence is Cell division protein ZapA (109 aa).

Positions Pro21–Gln97 form a coiled coil.

Belongs to the ZapA family. Type 1 subfamily. In terms of assembly, homodimer. Interacts with FtsZ.

The protein resides in the cytoplasm. In terms of biological role, activator of cell division through the inhibition of FtsZ GTPase activity, therefore promoting FtsZ assembly into bundles of protofilaments necessary for the formation of the division Z ring. It is recruited early at mid-cell but it is not essential for cell division. This Salmonella agona (strain SL483) protein is Cell division protein ZapA.